The sequence spans 1363 residues: DNA-directed RNA polymerase subunit beta (1363 aa).

Belongs to the RNA polymerase beta chain family. As to quaternary structure, the RNAP catalytic core consists of 2 alpha, 1 beta, 1 beta' and 1 omega subunit. When a sigma factor is associated with the core the holoenzyme is formed, which can initiate transcription.

It carries out the reaction RNA(n) + a ribonucleoside 5'-triphosphate = RNA(n+1) + diphosphate. Functionally, DNA-dependent RNA polymerase catalyzes the transcription of DNA into RNA using the four ribonucleoside triphosphates as substrates. The chain is DNA-directed RNA polymerase subunit beta from Pelagibacter ubique (strain HTCC1062).